We begin with the raw amino-acid sequence, 443 residues long: MSSSAPSSASPKTFRVKSFGCQMNVYDGERMAELLAAQGMSAAGDGDDADLVVLNTCHIREKATEKVYSDIGRLRRADGSAPLIAVAGCVAQAEGEEIMARAPSVKVVVGPQSYHRLPEMVADAAAGKRSTETDMPAEAKFAALPKRRKSAPTAFLTVQEGCDKFCTYCVVPYTRGAEISRPFSDLVEEAKLLVAGGAREITLLGQNVNAWAGEDDKGRPIGLDGLARALAAEPDLKRIRYTTSHPNDMTDGLIAAHGELEKLMPFLHLPVQAGNDRVLKAMNRSHTADSYMALLERIRAARPDIALSGDFIVGFPGETDAEFEDTLRLVDAVGYAQAFSFKYSARPGTPAATMENHVPVAVMDERLQRLQAALNRDQLAFNKASVGKTCEVLVERRGKHPGQWLGKSPWLQSVHFSGEAEIGDMVTVELIEAGPNSISGRLA.

Residues 12-126 form the MTTase N-terminal domain; that stretch reads KTFRVKSFGC…LPEMVADAAA (115 aa). [4Fe-4S] cluster is bound by residues Cys21, Cys57, Cys89, Cys162, Cys166, and Cys169. Residues 148–380 form the Radical SAM core domain; it reads RKSAPTAFLT…QAALNRDQLA (233 aa). The 61-residue stretch at 383 to 443 folds into the TRAM domain; that stretch reads KASVGKTCEV…GPNSISGRLA (61 aa).

Belongs to the methylthiotransferase family. MiaB subfamily. Monomer. [4Fe-4S] cluster is required as a cofactor.

Its subcellular location is the cytoplasm. The catalysed reaction is N(6)-dimethylallyladenosine(37) in tRNA + (sulfur carrier)-SH + AH2 + 2 S-adenosyl-L-methionine = 2-methylsulfanyl-N(6)-dimethylallyladenosine(37) in tRNA + (sulfur carrier)-H + 5'-deoxyadenosine + L-methionine + A + S-adenosyl-L-homocysteine + 2 H(+). Functionally, catalyzes the methylthiolation of N6-(dimethylallyl)adenosine (i(6)A), leading to the formation of 2-methylthio-N6-(dimethylallyl)adenosine (ms(2)i(6)A) at position 37 in tRNAs that read codons beginning with uridine. This is tRNA-2-methylthio-N(6)-dimethylallyladenosine synthase from Novosphingobium aromaticivorans (strain ATCC 700278 / DSM 12444 / CCUG 56034 / CIP 105152 / NBRC 16084 / F199).